Consider the following 406-residue polypeptide: Tyrosine--tRNA ligase (406 aa).

Tyrosine 35 is an L-tyrosine binding site. The short motif at 40–49 (PTADSLHIGH) is the 'HIGH' region element. Residues tyrosine 168 and glutamine 172 each contribute to the L-tyrosine site. A 'KMSKS' region motif is present at residues 228-232 (KMGKT). Lysine 231 is a binding site for ATP. In terms of domain architecture, S4 RNA-binding spans 340 to 406 (CSVVELLVDI…KKNYNRIIIK (67 aa)).

It belongs to the class-I aminoacyl-tRNA synthetase family. TyrS type 1 subfamily. As to quaternary structure, homodimer.

The protein resides in the cytoplasm. The enzyme catalyses tRNA(Tyr) + L-tyrosine + ATP = L-tyrosyl-tRNA(Tyr) + AMP + diphosphate + H(+). In terms of biological role, catalyzes the attachment of tyrosine to tRNA(Tyr) in a two-step reaction: tyrosine is first activated by ATP to form Tyr-AMP and then transferred to the acceptor end of tRNA(Tyr). The chain is Tyrosine--tRNA ligase from Clostridium kluyveri (strain NBRC 12016).